The following is a 539-amino-acid chain: Glutamate/serine transporter AimA (539 aa).

Transmembrane regions (helical) follow at residues F11–W31, I36–A56, S82–V102, A137–F157, I164–F184, G199–F219, I238–F258, L283–S303, L350–I370, L401–W421, W424–Y444, F457–G477, and V486–W506.

This sequence belongs to the amino acid-polyamine-organocation (APC) superfamily. AGT (TC 2.A.3.11) family.

It is found in the cell membrane. Major glutamate and serine transporter. Cannot transport threonine. AimA is the major glutamate transporter under standard growth conditions when glutamate is not limiting in the medium. In Bacillus subtilis (strain 168), this protein is Glutamate/serine transporter AimA.